Here is a 198-residue protein sequence, read N- to C-terminus: Ribonuclease HII (198 aa).

The RNase H type-2 domain maps to 10–198; the sequence is HLVAGVDEVG…PVKRALGLVC (189 aa). The a divalent metal cation site is built by D16, E17, and D108.

It belongs to the RNase HII family. Mn(2+) serves as cofactor. Requires Mg(2+) as cofactor.

It localises to the cytoplasm. The catalysed reaction is Endonucleolytic cleavage to 5'-phosphomonoester.. Its function is as follows. Endonuclease that specifically degrades the RNA of RNA-DNA hybrids. The sequence is that of Ribonuclease HII from Enterobacter sp. (strain 638).